The following is a 392-amino-acid chain: Lipase (392 aa).

A signal peptide spans 1 to 26 (MVSFISISQGVSLCLLVSSMMLGSSA). The propeptide occupies 27-95 (VPVSGKSGSS…GGNLTSIGKR (69 aa)). Residues 50-69 (PLISSRCAPPSNKGSKSDLQ) form a disordered region. 3 disulfide bridges follow: cysteine 152-cysteine 391, cysteine 163-cysteine 166, and cysteine 358-cysteine 367. The active-site Nucleophile is the serine 268. The active-site Charge relay system is the aspartate 327. A Ca(2+)-binding site is contributed by aspartate 379. The Charge relay system role is filled by histidine 380.

This sequence belongs to the AB hydrolase superfamily. Lipase family.

It is found in the secreted. It localises to the extracellular space. The catalysed reaction is a triacylglycerol + H2O = a diacylglycerol + a fatty acid + H(+). With respect to regulation, lipase activity is maximal at a lipid-water interface (interfacial activation), probably by an induced conformational change that results in an increased accessibility of the active site to the substrate. Functionally, hydrolyzes ester bonds of triglycerides as well as of their derived partial glycerides with a strong 1,3-positional specificity. The chain is Lipase from Rhizopus niveus.